Reading from the N-terminus, the 77-residue chain is Acyl carrier protein (77 aa).

The 76-residue stretch at 2–77 folds into the Carrier domain; it reads SDIAARVKKI…DATKFISEAQ (76 aa). Serine 37 bears the O-(pantetheine 4'-phosphoryl)serine mark.

Belongs to the acyl carrier protein (ACP) family. 4'-phosphopantetheine is transferred from CoA to a specific serine of apo-ACP by AcpS. This modification is essential for activity because fatty acids are bound in thioester linkage to the sulfhydryl of the prosthetic group.

It is found in the cytoplasm. It participates in lipid metabolism; fatty acid biosynthesis. Carrier of the growing fatty acid chain in fatty acid biosynthesis. The polypeptide is Acyl carrier protein (Jannaschia sp. (strain CCS1)).